The chain runs to 602 residues: Elongation factor 4 (602 aa).

Residues 7–189 enclose the tr-type G domain; sequence KRVRNFSIIA…AVVEKVPYPK (183 aa). GTP-binding positions include 19–24 and 136–139; these read DHGKST and NKID.

This sequence belongs to the TRAFAC class translation factor GTPase superfamily. Classic translation factor GTPase family. LepA subfamily.

It localises to the cell membrane. The enzyme catalyses GTP + H2O = GDP + phosphate + H(+). Its function is as follows. Required for accurate and efficient protein synthesis under certain stress conditions. May act as a fidelity factor of the translation reaction, by catalyzing a one-codon backward translocation of tRNAs on improperly translocated ribosomes. Back-translocation proceeds from a post-translocation (POST) complex to a pre-translocation (PRE) complex, thus giving elongation factor G a second chance to translocate the tRNAs correctly. Binds to ribosomes in a GTP-dependent manner. This chain is Elongation factor 4, found in Clostridium tetani (strain Massachusetts / E88).